Consider the following 203-residue polypeptide: LexA repressor 2 (203 aa).

Positions 28-48 form a DNA-binding region, H-T-H motif; that stretch reads MREIARHLNVNGTLGVAKHLE. Residues serine 122 and lysine 159 each act as for autocatalytic cleavage activity in the active site.

The protein belongs to the peptidase S24 family. Homodimer.

The enzyme catalyses Hydrolysis of Ala-|-Gly bond in repressor LexA.. In terms of biological role, represses a number of genes involved in the response to DNA damage (SOS response), including recA and lexA. In the presence of single-stranded DNA, RecA interacts with LexA causing an autocatalytic cleavage which disrupts the DNA-binding part of LexA, leading to derepression of the SOS regulon and eventually DNA repair. In Geobacter sulfurreducens (strain ATCC 51573 / DSM 12127 / PCA), this protein is LexA repressor 2.